We begin with the raw amino-acid sequence, 90 residues long: UPF0367 protein P9301_01411 (90 aa).

It belongs to the UPF0367 family.

In Prochlorococcus marinus (strain MIT 9301), this protein is UPF0367 protein P9301_01411.